A 201-amino-acid chain; its full sequence is Probable nicotinate-nucleotide adenylyltransferase (201 aa).

Belongs to the NadD family.

It carries out the reaction nicotinate beta-D-ribonucleotide + ATP + H(+) = deamido-NAD(+) + diphosphate. It functions in the pathway cofactor biosynthesis; NAD(+) biosynthesis; deamido-NAD(+) from nicotinate D-ribonucleotide: step 1/1. Its function is as follows. Catalyzes the reversible adenylation of nicotinate mononucleotide (NaMN) to nicotinic acid adenine dinucleotide (NaAD). This is Probable nicotinate-nucleotide adenylyltransferase from Bacteroides fragilis (strain YCH46).